The primary structure comprises 76 residues: Large ribosomal subunit protein eL20 (76 aa).

Belongs to the eukaryotic ribosomal protein eL20 family. As to quaternary structure, part of the 50S ribosomal subunit. Binds 23S rRNA.

This Methanococcus maripaludis (strain C6 / ATCC BAA-1332) protein is Large ribosomal subunit protein eL20.